A 380-amino-acid polypeptide reads, in one-letter code: Spore coat protein B (380 aa).

Residues 224-364 are disordered; it reads GPKGSYKKED…SSGKQKEDYS (141 aa). Residues 229–248 are compositionally biased toward basic and acidic residues; the sequence is YKKEDQKNEQNQEDNNDKDS. 3 stretches are compositionally biased toward low complexity: residues 275–288, 296–315, and 338–356; these read SKSG…SSSK, SSDY…SSSK, and SSDY…IKSS.

The protein is Spore coat protein B (cotB) of Bacillus subtilis (strain 168).